The primary structure comprises 108 residues: Trp operon repressor homolog (108 aa).

A DNA-binding region spans residues 59-82 (QRQISQLLGVGVATITRGSNELKS).

The protein belongs to the TrpR family. As to quaternary structure, homodimer.

Its subcellular location is the cytoplasm. This protein is an aporepressor. When complexed with L-tryptophan it binds the operator region of the trp operon and prevents the initiation of transcription. In Aliivibrio salmonicida (strain LFI1238) (Vibrio salmonicida (strain LFI1238)), this protein is Trp operon repressor homolog.